A 394-amino-acid chain; its full sequence is NAD(P)H-quinone oxidoreductase subunit H (394 aa).

Belongs to the complex I 49 kDa subunit family. In terms of assembly, NDH-1 can be composed of about 15 different subunits; different subcomplexes with different compositions have been identified which probably have different functions.

Its subcellular location is the cellular thylakoid membrane. It catalyses the reaction a plastoquinone + NADH + (n+1) H(+)(in) = a plastoquinol + NAD(+) + n H(+)(out). The enzyme catalyses a plastoquinone + NADPH + (n+1) H(+)(in) = a plastoquinol + NADP(+) + n H(+)(out). Its function is as follows. NDH-1 shuttles electrons from an unknown electron donor, via FMN and iron-sulfur (Fe-S) centers, to quinones in the respiratory and/or the photosynthetic chain. The immediate electron acceptor for the enzyme in this species is believed to be plastoquinone. Couples the redox reaction to proton translocation, and thus conserves the redox energy in a proton gradient. Cyanobacterial NDH-1 also plays a role in inorganic carbon-concentration. The chain is NAD(P)H-quinone oxidoreductase subunit H from Prochlorococcus marinus (strain MIT 9211).